The following is a 1365-amino-acid chain: Homeotic protein spalt-major (1365 aa).

Disordered regions lie at residues 47–194, 270–298, and 322–363; these read SADK…EVTL, QAKQ…EEEE, and LINA…NTHK. Low complexity-rich tracts occupy residues 63-76 and 87-99; these read SPLT…SPSR and EQST…PEQS. Basic and acidic residues predominate over residues 103–117; that stretch reads HQLENDIKSEAKSEI. Residues 146–157 are compositionally biased toward low complexity; the sequence is PSSPVAEASAEE. Residues 159–181 show a composition bias toward basic and acidic residues; that stretch reads ATERTPEKEKEKDVEVDVEKPDE. A compositionally biased stretch (acidic residues) spans 275–298; sequence EDTEEDADQEQDQEQETDTYEEEE. A compositionally biased stretch (basic and acidic residues) spans 346-363; it reads HDHESQPNRRPSLDNTHK. C2H2-type zinc fingers lie at residues 451–473 and 479–501; these read HRCR…IRSH and FKCN…FQRH. 2 disordered regions span residues 508–554 and 586–716; these read VPMN…ASFP and ELPT…TPGQ. The span at 530-539 shows a compositional bias: polar residues; it reads MSPTDSSPNH. Positions 540-554 are enriched in pro residues; that stretch reads SPAPPPLGSAPASFP. 2 stretches are compositionally biased toward basic and acidic residues: residues 603 to 622 and 638 to 662; these read PQVK…HEQE and VRIK…EPRR. Phosphoserine occurs at positions 739 and 744. The interval 740-772 is disordered; that stretch reads PEHHSPVRSPAGGALPPGVPPPPHHHPHHMARS. 3 consecutive C2H2-type zinc fingers follow at residues 824–846, 852–874, and 884–906; these read NQCV…YRTH, FKCR…MAVH, and HQCP…IRLH. 3 disordered regions span residues 948–1012, 1030–1129, and 1146–1241; these read ALPG…RSGD, VVNT…ILTS, and HHLQ…GARP. Over residues 976-991 the composition is skewed to acidic residues; it reads DMDDNMDCGEDYDDDV. The span at 1040–1054 shows a compositional bias: low complexity; that stretch reads SSASSHGHSVGSTSA. Positions 1055 to 1079 are enriched in polar residues; sequence PTSPSVHASSQVIKRSSSPARSEAS. Residues serine 1076 and serine 1079 each carry the phosphoserine modification. 3 stretches are compositionally biased toward low complexity: residues 1085 to 1100, 1114 to 1123, and 1146 to 1168; these read LTPR…SRSP, RSPSGSSHAS, and HHLQ…AAAA. Positions 1181-1191 are enriched in basic and acidic residues; that stretch reads QHQEQLRREAA. Over residues 1192-1218 the composition is skewed to low complexity; sequence EAQQKAAAAAAAAAAAAAAQRQTPPQA. 2 C2H2-type zinc fingers span residues 1289 to 1311 and 1317 to 1339; these read TTCG…YRSH and FKCS…MLTH.

Belongs to the sal C2H2-type zinc-finger protein family.

The protein localises to the nucleus. In terms of biological role, required for the establishment of the posterior-most head and the anterior-most tail segments of the embryo. Probably function as a transcriptional regulator. Could repress the transcription of the tsh gene. The sequence is that of Homeotic protein spalt-major (salm) from Drosophila melanogaster (Fruit fly).